Consider the following 298-residue polypeptide: MGNVQSQEGETRAHAVPSQDATTTPDNANNVPKEPRAQSMISIAADDLNQEGEMSDDNQQEGGNNRTSQNGTSGSSGHTKRRSQTSGKKTHQPYSGPCVPTIIRWRGGGEVVYVTGSFSRWKKKIQLLKSEDYTVLLQLRPGTQRFKFLVDGIWCCSSDFPTATDAEGNLYNYLEVEANEKLGASIDERLSQVHTDLPMEEKSESEQYSTEIPAFLTSNTLQELKLPKPPSLPPHLEKCILNSNTAYKEDQSVLPNPNHVLLNHLAAANTQLGVLALSATTRYHRKYVTTAMFKNFDV.

Residues M1–C98 are disordered. The segment covering Q19–N30 has biased composition (polar residues). The span at L48–Q59 shows a compositional bias: acidic residues. A compositionally biased stretch (polar residues) spans Q60–G77. The segment covering H78 to H91 has biased composition (basic residues). D250–S252 contacts ADP.

It belongs to the 5'-AMP-activated protein kinase beta subunit family. As to quaternary structure, AMPK is a heterotrimer of an alpha catalytic subunit (ssp2), a beta (amk2) and a gamma non-catalytic subunits (cbs2). The beta subunit serves as a bridge between the catalytic and the regulatory subunit.

It localises to the cytoplasm. Beta subunit of AMP-activated protein kinase (AMPK), which is required for transcriptional, metabolic, and developmental adaptations in response to glucose limitation. Has a structural role, mediating heterotrimer formation, and a regulatory role, defining carbon source-regulated subcellular location and substrate specificity of the AMPK kinase complex. This Schizosaccharomyces pombe (strain 972 / ATCC 24843) (Fission yeast) protein is 5'-AMP-activated protein kinase subunit beta (amk2).